A 95-amino-acid chain; its full sequence is Aspartyl/glutamyl-tRNA(Asn/Gln) amidotransferase subunit C (95 aa).

It belongs to the GatC family. In terms of assembly, heterotrimer of A, B and C subunits.

The enzyme catalyses L-glutamyl-tRNA(Gln) + L-glutamine + ATP + H2O = L-glutaminyl-tRNA(Gln) + L-glutamate + ADP + phosphate + H(+). It carries out the reaction L-aspartyl-tRNA(Asn) + L-glutamine + ATP + H2O = L-asparaginyl-tRNA(Asn) + L-glutamate + ADP + phosphate + 2 H(+). In terms of biological role, allows the formation of correctly charged Asn-tRNA(Asn) or Gln-tRNA(Gln) through the transamidation of misacylated Asp-tRNA(Asn) or Glu-tRNA(Gln) in organisms which lack either or both of asparaginyl-tRNA or glutaminyl-tRNA synthetases. The reaction takes place in the presence of glutamine and ATP through an activated phospho-Asp-tRNA(Asn) or phospho-Glu-tRNA(Gln). The chain is Aspartyl/glutamyl-tRNA(Asn/Gln) amidotransferase subunit C from Rhizobium johnstonii (strain DSM 114642 / LMG 32736 / 3841) (Rhizobium leguminosarum bv. viciae).